The sequence spans 150 residues: 3-dehydroquinate dehydratase (150 aa).

Residue Tyr26 is the Proton acceptor of the active site. Substrate is bound by residues Asn77, His83, and Asp90. His103 (proton donor) is an active-site residue. Substrate contacts are provided by residues 104–105 and Arg114; that span reads LS.

Belongs to the type-II 3-dehydroquinase family. In terms of assembly, homododecamer.

The catalysed reaction is 3-dehydroquinate = 3-dehydroshikimate + H2O. Its pathway is metabolic intermediate biosynthesis; chorismate biosynthesis; chorismate from D-erythrose 4-phosphate and phosphoenolpyruvate: step 3/7. Functionally, catalyzes a trans-dehydration via an enolate intermediate. The polypeptide is 3-dehydroquinate dehydratase (Pseudoalteromonas translucida (strain TAC 125)).